The sequence spans 130 residues: Arginine decarboxylase proenzyme (130 aa).

The active-site Schiff-base intermediate with substrate; via pyruvic acid is the Ser-78. A Pyruvic acid (Ser); by autocatalysis modification is found at Ser-78. The active-site Proton acceptor; for processing activity is His-83. Cys-98 (proton donor; for catalytic activity) is an active-site residue.

Belongs to the prokaryotic AdoMetDC family. Type 1 subfamily. Heterooctamer of four alpha and four beta chains arranged as a tetramer of alpha/beta heterodimers. Requires pyruvate as cofactor. Post-translationally, is synthesized initially as an inactive proenzyme. Formation of the active enzyme involves a self-maturation process in which the active site pyruvoyl group is generated from an internal serine residue via an autocatalytic post-translational modification. Two non-identical subunits are generated from the proenzyme in this reaction, and the pyruvate is formed at the N-terminus of the alpha chain, which is derived from the carboxyl end of the proenzyme. The post-translation cleavage follows an unusual pathway, termed non-hydrolytic serinolysis, in which the side chain hydroxyl group of the serine supplies its oxygen atom to form the C-terminus of the beta chain, while the remainder of the serine residue undergoes an oxidative deamination to produce ammonia and the pyruvoyl group blocking the N-terminus of the alpha chain.

It catalyses the reaction L-arginine + H(+) = agmatine + CO2. The protein operates within amine and polyamine biosynthesis; agmatine biosynthesis; agmatine from L-arginine: step 1/1. Its function is as follows. Specifically catalyzes the decarboxylation of L-arginine to agmatine. Has no S-adenosylmethionine decarboxylase (AdoMetDC) activity. In Sulfolobus acidocaldarius (strain ATCC 33909 / DSM 639 / JCM 8929 / NBRC 15157 / NCIMB 11770), this protein is Arginine decarboxylase proenzyme.